The sequence spans 110 residues: UPF0102 protein Abu_0255 (110 aa).

The protein belongs to the UPF0102 family.

The polypeptide is UPF0102 protein Abu_0255 (Aliarcobacter butzleri (strain RM4018) (Arcobacter butzleri)).